The chain runs to 401 residues: MKLVEIAEDILSKANAYTNNTGLTSSQRFQLREEIRYQANGILSAIDGPEQTMKAIARSYTTCTALKVCVDLKLASHLPLSDARSLSQLAQICGCDSLVLRPMLRLLAKNGIFEQVDAETWQHTELSAVMAQPPFQALEEKYRSVAHLPRLLQAVSHQFPTPGRTAFNQVYCTSLDFYTYSNELDHAAARNFAFSMKELARNQIPFVQQSYPLETIDPESHFIDVAGGVGYLSFFLAGSFPKATFEVQDHPFIIEEAHSVCPSELRDRITFRAHNILHPQPEIAKEINGRLVFLVKIILHDHGDDDCRLMLRNLVSVMKQGDRILIIDTVIPETGGSLSSANSDIIIMSMFGSGHRTLEEFRALIHRCGEDLVIETFASGDEEYDGMMVIEVRKAEPVLDN.

D249 is an S-adenosyl-L-methionine binding site. The active-site Proton acceptor is H300.

This sequence belongs to the class I-like SAM-binding methyltransferase superfamily. Cation-independent O-methyltransferase family.

It functions in the pathway mycotoxin biosynthesis. Its function is as follows. O-methyltransferase; part of the satratoxin SC3 cluster involved in the biosynthesis of satratoxins, trichothecene mycotoxins that are associated with human food poisonings. Satratoxins are suggested to be made by products of multiple gene clusters (SC1, SC2 and SC3) that encode 21 proteins in all, including polyketide synthases, acetyltransferases, and other enzymes expected to modify the trichothecene skeleton. SC1 encodes 10 proteins, SAT1 to SAT10. The largest are SAT8, which encodes a putative polyketide synthase (PKS) with a conventional non-reducing architecture, and SAT10, a putative protein containing four ankyrin repeats and thus may be involved in protein scaffolding. The putative short-chain reductase SAT3 may assist the PKS in some capacity. SAT6 contains a secretory lipase domain and acts probably as a trichothecene esterase. SAT5 encodes a putative acetyltransferase, and so, with SAT6, may affect endogenous protection from toxicity. The probable transcription factor SAT9 may regulate the expression of the SC1 cluster. SC2 encodes proteins SAT11 to SAT16, the largest of which encodes the putative reducing PKS SAT13. SAT11 is a cytochrome P450 monooxygenase, while SAT14 and SAT16 are probable acetyltransferases. The SC2 cluster may be regulated by the transcription factor SAT15. SC3 is a small cluster that encodes 5 proteins, SAT17 to SAT21. SAT21 is a putative MFS-type transporter which may have a role in exporting secondary metabolites. The four other proteins putatively encoded in SC3 include the taurine hydroxylase-like protein SAT17, the O-methyltransferase SAT18, the acetyltransferase SAT19, and the Cys6-type zinc finger SAT20, the latter being probably involved in regulation of SC3 expression. This Stachybotrys chartarum (strain CBS 109288 / IBT 7711) (Toxic black mold) protein is O-methyltransferase SAT18.